The sequence spans 375 residues: E3 ubiquitin-protein ligase FANCL (375 aa).

The residue at position 2 (Ala2) is an N-acetylalanine. The segment at Leu104 to Ala294 is UBC-RWD region (URD). Zn(2+)-binding residues include Cys307, Cys310, Cys324, Cys329, His334, Cys337, Cys359, and Cys362. An RING-type; degenerate zinc finger spans residues Cys307 to Ser363.

In terms of assembly, interacts with GGN. Belongs to the multisubunit FA complex composed of FANCA, FANCB, FANCC, FANCE, FANCF, FANCG, FANCL/PHF9 and FANCM. The complex is not found in FA patients. In complex with FANCF, FANCA and FANCG, but not with FANCC, nor FANCE, interacts with HES1; this interaction may be essential for the stability and nuclear localization of FA core complex proteins. Interacts with FANCI. Directly interacts (via the RING-type zinc finger) with UBE2T and UBE2W. In terms of processing, the RING-type zinc finger domain is monoubiquitinated in the presence of UBE2T and UBE2W.

The protein resides in the cytoplasm. The protein localises to the nucleus. The enzyme catalyses S-ubiquitinyl-[E2 ubiquitin-conjugating enzyme]-L-cysteine + [acceptor protein]-L-lysine = [E2 ubiquitin-conjugating enzyme]-L-cysteine + N(6)-ubiquitinyl-[acceptor protein]-L-lysine.. The protein operates within protein modification; protein ubiquitination. Functionally, ubiquitin ligase protein that mediates monoubiquitination of FANCD2 in the presence of UBE2T, a key step in the DNA damage pathway. Also mediates monoubiquitination of FANCI. May stimulate the ubiquitin release from UBE2W. May be required for proper primordial germ cell proliferation in the embryonic stage, whereas it is probably not needed for spermatogonial proliferation after birth. This Homo sapiens (Human) protein is E3 ubiquitin-protein ligase FANCL (FANCL).